The following is a 487-amino-acid chain: UDP-glycosyltransferase 85A7 (487 aa).

UDP-alpha-D-glucose is bound by residues Cys-364–Gln-366, His-381–Glu-389, and Phe-403–Gln-406.

It belongs to the UDP-glycosyltransferase family. In terms of tissue distribution, expressed in roots, shoots, leaves and flowers.

The sequence is that of UDP-glycosyltransferase 85A7 (UGT85A7) from Arabidopsis thaliana (Mouse-ear cress).